The sequence spans 359 residues: UDP-3-O-acylglucosamine N-acyltransferase (359 aa).

The Proton acceptor role is filled by H256.

It belongs to the transferase hexapeptide repeat family. LpxD subfamily. Homotrimer.

It catalyses the reaction a UDP-3-O-[(3R)-3-hydroxyacyl]-alpha-D-glucosamine + a (3R)-hydroxyacyl-[ACP] = a UDP-2-N,3-O-bis[(3R)-3-hydroxyacyl]-alpha-D-glucosamine + holo-[ACP] + H(+). It functions in the pathway bacterial outer membrane biogenesis; LPS lipid A biosynthesis. Its function is as follows. Catalyzes the N-acylation of UDP-3-O-acylglucosamine using 3-hydroxyacyl-ACP as the acyl donor. Is involved in the biosynthesis of lipid A, a phosphorylated glycolipid that anchors the lipopolysaccharide to the outer membrane of the cell. In Rhodopseudomonas palustris (strain BisB5), this protein is UDP-3-O-acylglucosamine N-acyltransferase.